A 692-amino-acid polypeptide reads, in one-letter code: Elongation factor G (692 aa).

The region spanning 8-282 (ERTRNIGIMA…AIVYYLPSPV (275 aa)) is the tr-type G domain. GTP is bound by residues 17-24 (AHIDAGKT), 81-85 (DTPGH), and 135-138 (NKMD).

The protein belongs to the TRAFAC class translation factor GTPase superfamily. Classic translation factor GTPase family. EF-G/EF-2 subfamily.

The protein resides in the cytoplasm. In terms of biological role, catalyzes the GTP-dependent ribosomal translocation step during translation elongation. During this step, the ribosome changes from the pre-translocational (PRE) to the post-translocational (POST) state as the newly formed A-site-bound peptidyl-tRNA and P-site-bound deacylated tRNA move to the P and E sites, respectively. Catalyzes the coordinated movement of the two tRNA molecules, the mRNA and conformational changes in the ribosome. The chain is Elongation factor G from Carboxydothermus hydrogenoformans (strain ATCC BAA-161 / DSM 6008 / Z-2901).